A 306-amino-acid chain; its full sequence is Putative dihydroorotate dehydrogenase A (fumarate) (306 aa).

FMN-binding positions include S20 and K44–G45. Residues K44 and N68 to L72 each bind substrate. Residues N98 and N126 each contribute to the FMN site. N126 contacts substrate. C129 functions as the Nucleophile in the catalytic mechanism. Positions 164 and 190 each coordinate FMN. N191 to T192 contributes to the substrate binding site. Residues G216, G244–G245, and G266–T267 contribute to the FMN site.

The protein belongs to the dihydroorotate dehydrogenase family. Type 1 subfamily. Homodimer. FMN is required as a cofactor.

It localises to the cytoplasm. The catalysed reaction is (S)-dihydroorotate + fumarate = orotate + succinate. Its pathway is pyrimidine metabolism; UMP biosynthesis via de novo pathway. Catalyzes the conversion of dihydroorotate to orotate with fumarate as the electron acceptor. This is Putative dihydroorotate dehydrogenase A (fumarate) (pyrD) from Aquifex aeolicus (strain VF5).